Here is a 410-residue protein sequence, read N- to C-terminus: Putative competence-damage inducible protein (410 aa).

This sequence belongs to the CinA family.

This is Putative competence-damage inducible protein from Clostridium beijerinckii (strain ATCC 51743 / NCIMB 8052) (Clostridium acetobutylicum).